We begin with the raw amino-acid sequence, 656 residues long: Phosphoprotein 85 (656 aa).

Disordered regions lie at residues 1-174 (MSSR…EGDE) and 615-656 (NGNH…EYCC). Residues 46 to 55 (SATEDLDRME) are compositionally biased toward basic and acidic residues. Composition is skewed to low complexity over residues 59–70 (SPYSVSSDAPSS) and 140–160 (DNSS…RSTS). Residues 625–634 (SPPPPLPPRD) show a composition bias toward pro residues. Over residues 635–656 (YPQRDERDRHRRDRRDSGEYCC) the composition is skewed to basic and acidic residues.

The protein belongs to the herpesviridae pp85 family. Phosphorylated.

The protein resides in the virion tegument. It is found in the host cytoplasm. This is Phosphoprotein 85 (UL25) from Homo sapiens (Human).